The following is a 249-amino-acid chain: UPF0696 protein C11orf68 homolog (249 aa).

Belongs to the UPF0696 family.

The chain is UPF0696 protein C11orf68 homolog from Danio rerio (Zebrafish).